Here is a 1032-residue protein sequence, read N- to C-terminus: MADIKIDSKVFQERVSHFYNAWKADKRSGDALFGGVSSIVILMGKVDENPEFHKNNAIHFWLLGYEFPTTLMLFTLDTIYILTTQKKAKYLDQVKGGRYPVEVLVRGKDAAENEKLFIKITDAIKAAGKKVGVLTKDTSKGPFIDEWKKVYADNCKDVEEVDVAQALSAGAFSVKDETELRAMRTSSKACVALLTPYFLDEMSNILDQDKKIKHSALADKVFNKLEDDKFWKTVELPNRQKLPADLDPEQLDWILGPIVQSGGKFDLKWQADSDNDILHPGIIIAAMGLRYKSYCSQIARTFMVDPNKSQESNYKFLLAVHNLILKEIRDGAIVKDVYTKAYNFVRSKKPDLEKHFLKNVGFGIGLENKDPTLILNNKNTRTLKDGMTLVVTTGFSDIQNPNPQDKNSKVYSLILSDTIRVTSSEPVVFTGEAPVDVDATSFFFKDEEEAQPTPKKEKRDSRVGAVATKNITSTRLRSERNTTVDEDADKRRREHQKELAQKKQKEGLAKYAESTADENGVEIKKFKRFESYKRDNQFPPKVKDMGIVIDQKNATIVLPVMGRPVPFHINTIKNASKSDEGEWSFLRINFLSPGQGVGRKDEQPFEDASAHFVRSLTFKSTDGDRYADIANQISNLKRDAVKKEQEKKDMEDVVEQDKLVEIRNRRPAVLDNVFIRPAMEGKRVPGKVEIHQNGIRYQSPLSTTQRVDILFSNVRHLFFQPCQHELIVIIHIHLKDPIIIGNKKKTKDVQFYREATDIQFDETGNRKRKYRYGDEDEFEAEQEERRRRAELDRLFKSFAEKIAEAGRNEGIEVDMPLRDLGFNGVPFRSNVYIQPTTECLIQITEPPFMVITLEDIEVAHLERVQFGLKNFDLVFVFKDFTRPPYHINTIPVESLEDVKEFLDSSDIAFSEGPLNLNWGVIMKTVTANTHQFFLDGGWGFLQNDSDDDEVEEEEEESAFEIDESELEDASESSEEDSEYDSNASEEASDEAEDSEEEEGEDWDELERKAKKRDRESGFDDEEERAAPKKRRK.

A disordered region spans residues 446 to 513 (DEEEAQPTPK…QKEGLAKYAE (68 aa)). Residues 476-508 (LRSERNTTVDEDADKRRREHQKELAQKKQKEGL) show a composition bias toward basic and acidic residues. Coiled coils occupy residues 485–506 (DEDA…KQKE), 624–658 (DRYA…EQDK), 785–805 (RRRR…IAEA), and 949–1010 (EVEE…RKAK). Positions 943–1032 (NDSDDDEVEE…ERAAPKKRRK (90 aa)) are disordered. 2 stretches are compositionally biased toward acidic residues: residues 944 to 979 (DSDD…DSEY) and 986 to 1004 (EASD…DWDE).

This sequence belongs to the peptidase M24 family. SPT16 subfamily. Forms a stable heterodimer with ctc-1/pob3. The dimer of ctc-1 and ctc-2 weakly associates with multiple molecules of nhp-1/nhp6 to form the FACT complex.

The protein resides in the nucleus. It localises to the chromosome. Component of the FACT complex, a general chromatin factor that acts to reorganize nucleosomes. The FACT complex is involved in multiple processes that require DNA as a template such as mRNA elongation, DNA replication and DNA repair. During transcription elongation the FACT complex acts as a histone chaperone that both destabilizes and restores nucleosomal structure. It facilitates the passage of RNA polymerase II and transcription by promoting the dissociation of one histone H2A-H2B dimer from the nucleosome, then subsequently promotes the reestablishment of the nucleosome following the passage of RNA polymerase II. The polypeptide is FACT complex subunit ctc-2 (ctc-2) (Neurospora crassa (strain ATCC 24698 / 74-OR23-1A / CBS 708.71 / DSM 1257 / FGSC 987)).